Consider the following 177-residue polypeptide: NADH-quinone oxidoreductase subunit B (177 aa).

[4Fe-4S] cluster is bound by residues Cys-53, Cys-54, Cys-118, and Cys-148.

Belongs to the complex I 20 kDa subunit family. NDH-1 is composed of 14 different subunits. Subunits NuoB, C, D, E, F, and G constitute the peripheral sector of the complex. [4Fe-4S] cluster serves as cofactor.

The protein resides in the cell membrane. It carries out the reaction a quinone + NADH + 5 H(+)(in) = a quinol + NAD(+) + 4 H(+)(out). NDH-1 shuttles electrons from NADH, via FMN and iron-sulfur (Fe-S) centers, to quinones in the respiratory chain. The immediate electron acceptor for the enzyme in this species is believed to be a menaquinone. Couples the redox reaction to proton translocation (for every two electrons transferred, four hydrogen ions are translocated across the cytoplasmic membrane), and thus conserves the redox energy in a proton gradient. This Anoxybacillus flavithermus (strain DSM 21510 / WK1) protein is NADH-quinone oxidoreductase subunit B.